Consider the following 481-residue polypeptide: Ankyrin repeat, SAM and basic leucine zipper domain-containing protein 1 (481 aa).

Over residues 1–10 (MASGALRGLA) the composition is skewed to low complexity. The segment at 1–23 (MASGALRGLAVAGGGESSDSEDD) is disordered. Phosphoserine is present on residues Ser17, Ser18, and Ser20. ANK repeat units follow at residues 45–74 (EKSE…SVDS), 78–107 (YGWT…NASF), 110–144 (DKQT…DPNI), 148–177 (RLMT…EVNA), 181–210 (NGYT…NKML), and 214–243 (DGKI…PLEG). The SAM domain maps to 272 to 334 (SYTAFGDLEI…KILSALKELE (63 aa)).

Interacts with DDX4, PIWIL1, RANBP9 and TDRD1.

The protein localises to the cytoplasm. Functionally, plays a central role during spermatogenesis by repressing transposable elements and preventing their mobilization, which is essential for the germline integrity. Acts via the piRNA metabolic process, which mediates the repression of transposable elements during meiosis by forming complexes composed of piRNAs and Piwi proteins and governs the methylation and subsequent repression of transposons. Its association with pi-bodies suggests a participation in the primary piRNAs metabolic process. Required prior to the pachytene stage to facilitate the production of multiple types of piRNAs, including those associated with repeats involved in the regulation of retrotransposons. May act by mediating protein-protein interactions during germ cell maturation. This Eulemur macaco macaco (Black lemur) protein is Ankyrin repeat, SAM and basic leucine zipper domain-containing protein 1 (ASZ1).